A 179-amino-acid polypeptide reads, in one-letter code: TPD1 protein homolog 1 (179 aa).

An N-terminal signal peptide occupies residues 1-30 (MRMEHIYKFQHWLFFIGLGVLLSLSLSVKA).

The polypeptide is TPD1 protein homolog 1 (Arabidopsis thaliana (Mouse-ear cress)).